A 134-amino-acid polypeptide reads, in one-letter code: Endoribonuclease YbeY (134 aa).

Positions 94, 98, and 104 each coordinate Zn(2+).

This sequence belongs to the endoribonuclease YbeY family. It depends on Zn(2+) as a cofactor.

Its subcellular location is the cytoplasm. Single strand-specific metallo-endoribonuclease involved in late-stage 70S ribosome quality control and in maturation of the 3' terminus of the 16S rRNA. The polypeptide is Endoribonuclease YbeY (Campylobacter fetus subsp. fetus (strain 82-40)).